Here is a 206-residue protein sequence, read N- to C-terminus: ATP phosphoribosyltransferase (206 aa).

It belongs to the ATP phosphoribosyltransferase family. Short subfamily. Heteromultimer composed of HisG and HisZ subunits.

The protein resides in the cytoplasm. It catalyses the reaction 1-(5-phospho-beta-D-ribosyl)-ATP + diphosphate = 5-phospho-alpha-D-ribose 1-diphosphate + ATP. Its pathway is amino-acid biosynthesis; L-histidine biosynthesis; L-histidine from 5-phospho-alpha-D-ribose 1-diphosphate: step 1/9. Catalyzes the condensation of ATP and 5-phosphoribose 1-diphosphate to form N'-(5'-phosphoribosyl)-ATP (PR-ATP). Has a crucial role in the pathway because the rate of histidine biosynthesis seems to be controlled primarily by regulation of HisG enzymatic activity. The polypeptide is ATP phosphoribosyltransferase (Campylobacter curvus (strain 525.92)).